The following is a 213-amino-acid chain: MLTVAMPKGRIFSEALALLKQAGYDIPDDLEHSRKLMIDVPSEQLRFILAKPMDVVTYVEHGVADVGIAGKDVLLEEERDVYEMLDLRISPCYLAVAGLPNTHVHPIAPRVATKYPNIASTYFREQGEQVEIIKLNGSVELAPLIGLAERIVDIVSTGRTLKENGLVELERIVDVTSRFIVNPVSYRMQDRAIERMVDRLTYAIEKVGENDEN.

The protein belongs to the ATP phosphoribosyltransferase family. Short subfamily. As to quaternary structure, heteromultimer composed of HisG and HisZ subunits.

The protein localises to the cytoplasm. It catalyses the reaction 1-(5-phospho-beta-D-ribosyl)-ATP + diphosphate = 5-phospho-alpha-D-ribose 1-diphosphate + ATP. It functions in the pathway amino-acid biosynthesis; L-histidine biosynthesis; L-histidine from 5-phospho-alpha-D-ribose 1-diphosphate: step 1/9. In terms of biological role, catalyzes the condensation of ATP and 5-phosphoribose 1-diphosphate to form N'-(5'-phosphoribosyl)-ATP (PR-ATP). Has a crucial role in the pathway because the rate of histidine biosynthesis seems to be controlled primarily by regulation of HisG enzymatic activity. This chain is ATP phosphoribosyltransferase, found in Anoxybacillus flavithermus (strain DSM 21510 / WK1).